Here is a 389-residue protein sequence, read N- to C-terminus: Large envelope protein (389 aa).

N-acetylmethionine is present on methionine 1. The N-myristoyl glycine; by host moiety is linked to residue glycine 2. The tract at residues 2–108 (GQNLSTSNPL…PPLRDTHPQA (107 aa)) is pre-S1. The interval 2-163 (GQNLSTSNPL…FSTTGDPAPN (162 aa)) is pre-S. Over 2-170 (GQNLSTSNPL…APNMENITSG (169 aa)) the chain is Virion surface; in external conformation. Topologically, residues 2–242 (GQNLSTSNPL…PGYRWMCLRR (241 aa)) are intravirion; in internal conformation. Residues 75–107 (TTLPANPPPASTNRQSGRQPTPLSPPLRDTHPQ) form a disordered region. Over residues 85 to 95 (STNRQSGRQPT) the composition is skewed to polar residues. Residues 109–163 (MQWNSTTFHQALQDPRVRGLYFPAGGSSSGTLNPVPNTASHISSVFSTTGDPAPN) form a pre-S2 region. A helical transmembrane segment spans residues 171–191 (FLGPLLVLQAGFFLLTKILTI). Topologically, residues 192 to 242 (PQSLDSWWTSLNFLGGAPVCLGQNSQSPTSNHSPTSCPPICPGYRWMCLRR) are intravirion; in external conformation. The chain crosses the membrane as a helical span at residues 243-263 (FIIFLFILLLCLIFLLVLLDY). Residues 264–337 (QGMLPVCPLI…WASVRFSWLS (74 aa)) are Virion surface-facing. The N-linked (GlcNAc...) asparagine; by host glycan is linked to asparagine 309. The helical transmembrane segment at 338–358 (LLAPFVQWFAGLSPTVWLLAI) threads the bilayer. Residues 359 to 364 (WMMWYW) lie on the Intravirion side of the membrane. The helical transmembrane segment at 365-387 (GPNLYNILSPFIPLLPIFFCLWV) threads the bilayer. The Virion surface portion of the chain corresponds to 388 to 389 (YI).

It belongs to the orthohepadnavirus major surface antigen family. In its internal form (Li-HBsAg), interacts with the capsid protein and with the isoform S. Interacts with host chaperone CANX. In terms of assembly, associates with host chaperone CANX through its pre-S2 N glycan; this association may be essential for isoform M proper secretion. As to quaternary structure, interacts with isoform L. Interacts with the antigens of satellite virus HDV (HDVAgs); this interaction is required for encapsidation of HDV genomic RNA. In terms of processing, isoform M is N-terminally acetylated by host at a ratio of 90%, and N-glycosylated by host at the pre-S2 region. Post-translationally, myristoylated.

It localises to the virion membrane. The large envelope protein exists in two topological conformations, one which is termed 'external' or Le-HBsAg and the other 'internal' or Li-HBsAg. In its external conformation the protein attaches the virus to cell receptors and thereby initiating infection. This interaction determines the species specificity and liver tropism. This attachment induces virion internalization predominantly through caveolin-mediated endocytosis. The large envelope protein also assures fusion between virion membrane and endosomal membrane. In its internal conformation the protein plays a role in virion morphogenesis and mediates the contact with the nucleocapsid like a matrix protein. In terms of biological role, the middle envelope protein plays an important role in the budding of the virion. It is involved in the induction of budding in a nucleocapsid independent way. In this process the majority of envelope proteins bud to form subviral lipoprotein particles of 22 nm of diameter that do not contain a nucleocapsid. The sequence is that of Large envelope protein from Pan troglodytes (Chimpanzee).